Reading from the N-terminus, the 251-residue chain is Pyruvate formate-lyase-activating enzyme (251 aa).

The Radical SAM core domain occupies Val15–Asn244. Residues Cys29, Cys33, and Cys36 each contribute to the [4Fe-4S] cluster site. S-adenosyl-L-methionine contacts are provided by residues Tyr35 to His37, Gly79, Asp134 to Lys136, and His207.

Belongs to the organic radical-activating enzymes family. It depends on [4Fe-4S] cluster as a cofactor.

It localises to the cytoplasm. It carries out the reaction glycyl-[formate C-acetyltransferase] + reduced [flavodoxin] + S-adenosyl-L-methionine = glycin-2-yl radical-[formate C-acetyltransferase] + semiquinone [flavodoxin] + 5'-deoxyadenosine + L-methionine + H(+). Functionally, activation of pyruvate formate-lyase under anaerobic conditions by generation of an organic free radical, using S-adenosylmethionine and reduced flavodoxin as cosubstrates to produce 5'-deoxy-adenosine. The protein is Pyruvate formate-lyase-activating enzyme (pflA) of Staphylococcus epidermidis (strain ATCC 12228 / FDA PCI 1200).